A 120-amino-acid polypeptide reads, in one-letter code: MADSVRFPCMPFPPCFLVCTRDDIYEDEHGRQWVAAKVETSSHSPYCSKIETCVTVHLWQMTTLFQEPSPDSLKTFNFLPRTWRLESRNTYRGADAMHWRLVNHSQFYGTEELVLMLDSR.

It belongs to the TCL1 family.

The polypeptide is Protein TCL1B4 (Tcl1b4) (Mus musculus (Mouse)).